Here is a 300-residue protein sequence, read N- to C-terminus: Bifunctional protein FolD 2 (300 aa).

NADP(+) is bound by residues 165-167 (GRS), serine 190, and isoleucine 231.

This sequence belongs to the tetrahydrofolate dehydrogenase/cyclohydrolase family. As to quaternary structure, homodimer.

The catalysed reaction is (6R)-5,10-methylene-5,6,7,8-tetrahydrofolate + NADP(+) = (6R)-5,10-methenyltetrahydrofolate + NADPH. The enzyme catalyses (6R)-5,10-methenyltetrahydrofolate + H2O = (6R)-10-formyltetrahydrofolate + H(+). It functions in the pathway one-carbon metabolism; tetrahydrofolate interconversion. Catalyzes the oxidation of 5,10-methylenetetrahydrofolate to 5,10-methenyltetrahydrofolate and then the hydrolysis of 5,10-methenyltetrahydrofolate to 10-formyltetrahydrofolate. The polypeptide is Bifunctional protein FolD 2 (Pseudomonas savastanoi pv. phaseolicola (strain 1448A / Race 6) (Pseudomonas syringae pv. phaseolicola (strain 1448A / Race 6))).